The sequence spans 525 residues: Nucleolar complex protein 4 homolog (525 aa).

3 helical membrane-spanning segments follow: residues 305–325, 356–376, and 384–404; these read AAYDIGGAISLSALNGLFVPI, FFHLANIFLSSTHLPVYLVAA, and LSLTAPPTALLILLPFICNLI.

It belongs to the CBF/MAK21 family.

The protein localises to the nucleus membrane. It is found in the nucleus. The protein resides in the nucleolus. The sequence is that of Nucleolar complex protein 4 homolog (noc4l) from Danio rerio (Zebrafish).